A 39-amino-acid chain; its full sequence is Cytochrome b6-f complex subunit 5 (39 aa).

The chain crosses the membrane as a helical span at residues 5-25 (LLCGIVLGLVPITLLGLFVSA).

It belongs to the PetG family. As to quaternary structure, the 4 large subunits of the cytochrome b6-f complex are cytochrome b6, subunit IV (17 kDa polypeptide, PetD), cytochrome f and the Rieske protein, while the 4 small subunits are PetG, PetL, PetM and PetN. The complex functions as a dimer.

The protein localises to the cellular thylakoid membrane. Functionally, component of the cytochrome b6-f complex, which mediates electron transfer between photosystem II (PSII) and photosystem I (PSI), cyclic electron flow around PSI, and state transitions. PetG is required for either the stability or assembly of the cytochrome b6-f complex. The sequence is that of Cytochrome b6-f complex subunit 5 from Prochlorococcus marinus (strain MIT 9301).